The sequence spans 222 residues: Glutathione S-transferase A4 (222 aa).

Residue methionine 1 is modified to N-acetylmethionine. Positions 3–83 constitute a GST N-terminal domain; that stretch reads TKPKLHYPNG…YIADKHHLFG (81 aa). Glutathione contacts are provided by residues tyrosine 9, 54–55, and 67–68; these read QV and QT. Residues 85 to 208 enclose the GST C-terminal domain; the sequence is DLKERTLIDM…EPGSKKKPPP (124 aa).

This sequence belongs to the GST superfamily. Alpha family. Homodimer.

Its subcellular location is the cytoplasm. It catalyses the reaction RX + glutathione = an S-substituted glutathione + a halide anion + H(+). Conjugation of reduced glutathione to a wide number of exogenous and endogenous hydrophobic electrophiles. The chain is Glutathione S-transferase A4 (GSTA4) from Bos taurus (Bovine).